We begin with the raw amino-acid sequence, 298 residues long: Mimecan (298 aa).

Positions methionine 1 to alanine 20 are cleaved as a signal peptide. O-linked (GalNAc...) threonine glycosylation is present at threonine 80. N-linked (GlcNAc...) (keratan sulfate) asparagine glycosylation is present at asparagine 88. LRR repeat units follow at residues aspartate 112–isoleucine 131, lysine 132–isoleucine 155, glutamate 156–leucine 179, leucine 180–isoleucine 199, lysine 200–leucine 225, glutamate 226–isoleucine 246, and alanine 247–isoleucine 277. Asparagine 214 carries N-linked (GlcNAc...) (keratan sulfate) asparagine glycosylation. A disulfide bond links cysteine 255 and cysteine 288. A glycan (N-linked (GlcNAc...) (keratan sulfate) asparagine) is linked at asparagine 258.

Belongs to the small leucine-rich proteoglycan (SLRP) family. SLRP class III subfamily. In terms of processing, O-glycosylated with a core 1 or possibly core 8 glycan. Contains keratan sulfate. As to expression, bone.

The protein localises to the secreted. It localises to the extracellular space. It is found in the extracellular matrix. Its function is as follows. Induces bone formation in conjunction with TGF-beta-1 or TGF-beta-2. This chain is Mimecan (OGN), found in Homo sapiens (Human).